Reading from the N-terminus, the 428-residue chain is Enolase (428 aa).

Glutamine 164 serves as a coordination point for (2R)-2-phosphoglycerate. The active-site Proton donor is glutamate 206. 3 residues coordinate Mg(2+): aspartate 243, glutamate 286, and aspartate 313. Positions 338, 367, 368, and 389 each coordinate (2R)-2-phosphoglycerate. The active-site Proton acceptor is lysine 338.

The protein belongs to the enolase family. Mg(2+) is required as a cofactor.

The protein resides in the cytoplasm. It localises to the secreted. Its subcellular location is the cell surface. It carries out the reaction (2R)-2-phosphoglycerate = phosphoenolpyruvate + H2O. Its pathway is carbohydrate degradation; glycolysis; pyruvate from D-glyceraldehyde 3-phosphate: step 4/5. In terms of biological role, catalyzes the reversible conversion of 2-phosphoglycerate (2-PG) into phosphoenolpyruvate (PEP). It is essential for the degradation of carbohydrates via glycolysis. This is Enolase from Dehalococcoides mccartyi (strain ATCC BAA-2266 / KCTC 15142 / 195) (Dehalococcoides ethenogenes (strain 195)).